Consider the following 309-residue polypeptide: MSIRIIPQDELGSSEKRTADMIPPLLFPRLKNLYNRRAERLRELAENNPLGDYLRFAALIAHAQEVVLYDHPLEMDLTTRIKEASAQGKPPLDIHVLPRDKHWQKLLMALIAELKPEMSGPALAVIENLEKASTQELEDMASALFASDFSSVSSDKAPFIWAALSLYWAQMANLIPGKARAEYGEQRQYCPVCGSMPVSSMVQIGTTQGLRYLHCNLCETEWHVVRVKCSNCEQSGKLHYWSLDDEQAAIKAESCDDCGTYLKILYQEKDPKIEAVADDLASLVLDARMEQEGYARSSINPFLFPGEGE.

The protein belongs to the FdhE family.

The protein localises to the cytoplasm. Functionally, necessary for formate dehydrogenase activity. The protein is Protein FdhE of Escherichia coli (strain SMS-3-5 / SECEC).